The following is a 385-amino-acid chain: Deoxyguanosinetriphosphate triphosphohydrolase-like protein (385 aa).

The span at 1–14 (MTEGVEGRSQERSD) shows a compositional bias: basic and acidic residues. The segment at 1 to 23 (MTEGVEGRSQERSDLAGFAARSA) is disordered. One can recognise an HD domain in the interval 75-204 (RLTHSLEVAQ…INYADEIAYN (130 aa)).

The protein belongs to the dGTPase family. Type 2 subfamily.

The protein is Deoxyguanosinetriphosphate triphosphohydrolase-like protein of Geobacter metallireducens (strain ATCC 53774 / DSM 7210 / GS-15).